Consider the following 182-residue polypeptide: ATP-dependent protease subunit HslV (182 aa).

T2 is a catalytic residue. Na(+) contacts are provided by G157, C160, and T163.

Belongs to the peptidase T1B family. HslV subfamily. As to quaternary structure, a double ring-shaped homohexamer of HslV is capped on each side by a ring-shaped HslU homohexamer. The assembly of the HslU/HslV complex is dependent on binding of ATP.

The protein localises to the cytoplasm. The enzyme catalyses ATP-dependent cleavage of peptide bonds with broad specificity.. Allosterically activated by HslU binding. In terms of biological role, protease subunit of a proteasome-like degradation complex believed to be a general protein degrading machinery. The protein is ATP-dependent protease subunit HslV of Vibrio atlanticus (strain LGP32) (Vibrio splendidus (strain Mel32)).